The chain runs to 214 residues: NAD(P)H-quinone oxidoreductase subunit 5, chloroplastic (214 aa).

A run of 2 helical transmembrane segments spans residues 84 to 104 (LFPLLILLLFTFFIGFIGIPF) and 152 to 172 (SLAILGLFIAYIFYGSAYSFF).

Belongs to the complex I subunit 5 family. NDH is composed of at least 16 different subunits, 5 of which are encoded in the nucleus.

It is found in the plastid. The protein resides in the chloroplast thylakoid membrane. The catalysed reaction is a plastoquinone + NADH + (n+1) H(+)(in) = a plastoquinol + NAD(+) + n H(+)(out). The enzyme catalyses a plastoquinone + NADPH + (n+1) H(+)(in) = a plastoquinol + NADP(+) + n H(+)(out). NDH shuttles electrons from NAD(P)H:plastoquinone, via FMN and iron-sulfur (Fe-S) centers, to quinones in the photosynthetic chain and possibly in a chloroplast respiratory chain. The immediate electron acceptor for the enzyme in this species is believed to be plastoquinone. Couples the redox reaction to proton translocation, and thus conserves the redox energy in a proton gradient. The protein is NAD(P)H-quinone oxidoreductase subunit 5, chloroplastic (ndhF) of Brachypodium pinnatum (Tor grass).